A 215-amino-acid polypeptide reads, in one-letter code: Adenylate kinase (215 aa).

An ATP-binding site is contributed by 10–15; that stretch reads GSGKGT. The interval 30 to 59 is NMP; the sequence is STGDILREHVRNGTELGKEAKKYMDAGQLV. AMP is bound by residues Thr31, Arg36, 57–59, 85–88, and Gln92; these read QLV and GYPR. The interval 126-162 is LID; the sequence is GRRMCKCGRSYHIIFNPPKVPGKCDECGGELYHRDDD. Arg127 provides a ligand contact to ATP. Zn(2+) is bound by residues Cys130 and Cys132. 135–136 is an ATP binding site; that stretch reads SY. The Zn(2+) site is built by Cys149 and Cys152. AMP is bound by residues Arg159 and Arg170. Gly198 lines the ATP pocket.

It belongs to the adenylate kinase family. As to quaternary structure, monomer.

It localises to the cytoplasm. It carries out the reaction AMP + ATP = 2 ADP. Its pathway is purine metabolism; AMP biosynthesis via salvage pathway; AMP from ADP: step 1/1. In terms of biological role, catalyzes the reversible transfer of the terminal phosphate group between ATP and AMP. Plays an important role in cellular energy homeostasis and in adenine nucleotide metabolism. This is Adenylate kinase from Methanothrix thermoacetophila (strain DSM 6194 / JCM 14653 / NBRC 101360 / PT) (Methanosaeta thermophila).